Consider the following 142-residue polypeptide: Large ribosomal subunit protein uL13 (142 aa).

This sequence belongs to the universal ribosomal protein uL13 family. As to quaternary structure, part of the 50S ribosomal subunit.

Functionally, this protein is one of the early assembly proteins of the 50S ribosomal subunit, although it is not seen to bind rRNA by itself. It is important during the early stages of 50S assembly. The protein is Large ribosomal subunit protein uL13 of Xylella fastidiosa (strain M23).